We begin with the raw amino-acid sequence, 298 residues long: ATP synthase gamma chain (298 aa).

It belongs to the ATPase gamma chain family. F-type ATPases have 2 components, CF(1) - the catalytic core - and CF(0) - the membrane proton channel. CF(1) has five subunits: alpha(3), beta(3), gamma(1), delta(1), epsilon(1). CF(0) has three main subunits: a, b and c.

The protein localises to the cell inner membrane. Its function is as follows. Produces ATP from ADP in the presence of a proton gradient across the membrane. The gamma chain is believed to be important in regulating ATPase activity and the flow of protons through the CF(0) complex. The chain is ATP synthase gamma chain from Granulibacter bethesdensis (strain ATCC BAA-1260 / CGDNIH1).